The primary structure comprises 74 residues: Exodeoxyribonuclease 7 small subunit (74 aa).

This sequence belongs to the XseB family. Heterooligomer composed of large and small subunits.

The protein resides in the cytoplasm. It catalyses the reaction Exonucleolytic cleavage in either 5'- to 3'- or 3'- to 5'-direction to yield nucleoside 5'-phosphates.. In terms of biological role, bidirectionally degrades single-stranded DNA into large acid-insoluble oligonucleotides, which are then degraded further into small acid-soluble oligonucleotides. This is Exodeoxyribonuclease 7 small subunit from Leuconostoc citreum (strain KM20).